Reading from the N-terminus, the 222-residue chain is Riboflavin kinase (222 aa).

Residues 1-92 are H-T-H motif-like; the sequence is MVLAEDLECL…CRLFAHEGGH (92 aa). A riboflavin kinase region spans residues 93-222; sequence YTLPGIVISG…DRVNVEVAYD (130 aa). 102–107 is a binding site for CDP; sequence GLGEGR. Residues Thr-131 and Asn-133 each coordinate Mg(2+). 2 residues coordinate FMN: Ser-188 and Glu-196. Residue 201-204 coordinates CDP; sequence VGLR.

Belongs to the archaeal riboflavin kinase family. Mg(2+) is required as a cofactor.

The enzyme catalyses riboflavin + CTP = CDP + FMN + H(+). The protein operates within cofactor biosynthesis; FMN biosynthesis; FMN from riboflavin (CTP route): step 1/1. Functionally, catalyzes the CTP-dependent phosphorylation of riboflavin (vitamin B2) to form flavin mononucleotide (FMN). The chain is Riboflavin kinase (ribK) from Methanoregula boonei (strain DSM 21154 / JCM 14090 / 6A8).